Reading from the N-terminus, the 386-residue chain is MCDFVFCYGSSNERKLSMNIKETKKGLQLYVSNSEYIYIEIKKTYRKNLVINFEDSLKFMKFLVRKKIHCQFLTDKHGCGFCKNYREYFQYIVQNKHMKHIKFFVGKFIPMIRSRCGYSEFNLSNVVEDNKIFENNNIDLEIVKYMFEIGNLFDVDYIVVHVLTELDDIEIDFIDSLIDIYKQKITYLFTEDFSDIDNLLYTVLDLNIFITPALKTDDINLFNYVVEELSSIMSDIKEEELSKKQIIPFKKIKSKYILDADRIFKLIDICVGSFYEKSFHCPNIFKQLVEDYIENHGSIRLLFNNFFRKIVANDKFAYAGILCEKVNSDQNFLRKILFESVGSIKEAQILIDYGLDHEEIYEDPDFRKLPKTITKFIKKLIKETSN.

Belongs to the mimivirus L17x/L18x family.

This is an uncharacterized protein from Acanthamoeba polyphaga mimivirus (APMV).